A 396-amino-acid chain; its full sequence is 1-deoxy-D-xylulose 5-phosphate reductoisomerase (396 aa).

Residues T10, G11, S12, I13, and N123 each contribute to the NADPH site. Position 124 (K124) interacts with 1-deoxy-D-xylulose 5-phosphate. Position 125 (E125) interacts with NADPH. D149 contacts Mn(2+). The 1-deoxy-D-xylulose 5-phosphate site is built by S150, E151, S185, and H208. Position 151 (E151) interacts with Mn(2+). G214 contacts NADPH. The 1-deoxy-D-xylulose 5-phosphate site is built by S221, N226, K227, and E230. Residue E230 coordinates Mn(2+).

Belongs to the DXR family. Requires Mg(2+) as cofactor. It depends on Mn(2+) as a cofactor.

The enzyme catalyses 2-C-methyl-D-erythritol 4-phosphate + NADP(+) = 1-deoxy-D-xylulose 5-phosphate + NADPH + H(+). The protein operates within isoprenoid biosynthesis; isopentenyl diphosphate biosynthesis via DXP pathway; isopentenyl diphosphate from 1-deoxy-D-xylulose 5-phosphate: step 1/6. Its function is as follows. Catalyzes the NADPH-dependent rearrangement and reduction of 1-deoxy-D-xylulose-5-phosphate (DXP) to 2-C-methyl-D-erythritol 4-phosphate (MEP). This is 1-deoxy-D-xylulose 5-phosphate reductoisomerase from Shewanella sp. (strain MR-4).